Here is an 81-residue protein sequence, read N- to C-terminus: Mipartoxin-1A (81 aa).

Positions Met1–Ser21 are cleaved as a signal peptide. Intrachain disulfides connect Cys24–Cys42, Cys35–Cys61, Cys65–Cys73, and Cys74–Cys79.

This sequence belongs to the three-finger toxin family. Short-chain subfamily. In terms of tissue distribution, expressed by the venom gland.

The protein localises to the secreted. Its function is as follows. Snake venom neurotoxin that blocks neuromuscular transmission, presenting a postsynaptic action through the nicotinic acetylcholine receptor (nAChR). Has no cytotoxic activity. This is Mipartoxin-1A from Micrurus mipartitus (Red-tailed coral snake).